Reading from the N-terminus, the 371-residue chain is Queuine tRNA-ribosyltransferase (371 aa).

Asp90 functions as the Proton acceptor in the catalytic mechanism. Substrate-binding positions include Asp90 to Phe94, Asp144, Gln189, and Gly215. Residues Gly246 to Asn252 form an RNA binding region. Asp265 serves as the catalytic Nucleophile. The tract at residues Thr270 to Arg274 is RNA binding; important for wobble base 34 recognition. Residues Cys303, Cys305, Cys308, and His334 each contribute to the Zn(2+) site.

It belongs to the queuine tRNA-ribosyltransferase family. Homodimer. Within each dimer, one monomer is responsible for RNA recognition and catalysis, while the other monomer binds to the replacement base PreQ1. It depends on Zn(2+) as a cofactor.

The catalysed reaction is 7-aminomethyl-7-carbaguanine + guanosine(34) in tRNA = 7-aminomethyl-7-carbaguanosine(34) in tRNA + guanine. It functions in the pathway tRNA modification; tRNA-queuosine biosynthesis. Functionally, catalyzes the base-exchange of a guanine (G) residue with the queuine precursor 7-aminomethyl-7-deazaguanine (PreQ1) at position 34 (anticodon wobble position) in tRNAs with GU(N) anticodons (tRNA-Asp, -Asn, -His and -Tyr). Catalysis occurs through a double-displacement mechanism. The nucleophile active site attacks the C1' of nucleotide 34 to detach the guanine base from the RNA, forming a covalent enzyme-RNA intermediate. The proton acceptor active site deprotonates the incoming PreQ1, allowing a nucleophilic attack on the C1' of the ribose to form the product. After dissociation, two additional enzymatic reactions on the tRNA convert PreQ1 to queuine (Q), resulting in the hypermodified nucleoside queuosine (7-(((4,5-cis-dihydroxy-2-cyclopenten-1-yl)amino)methyl)-7-deazaguanosine). This chain is Queuine tRNA-ribosyltransferase, found in Helicobacter pylori (strain HPAG1).